The sequence spans 373 residues: Flagellar P-ring protein (373 aa).

The N-terminal stretch at 1 to 30 is a signal peptide; the sequence is MTNRWSFDVNKNLVTVLFTWLCLSISTAHA.

This sequence belongs to the FlgI family. The basal body constitutes a major portion of the flagellar organelle and consists of four rings (L,P,S, and M) mounted on a central rod.

The protein resides in the periplasm. It is found in the bacterial flagellum basal body. In terms of biological role, assembles around the rod to form the L-ring and probably protects the motor/basal body from shearing forces during rotation. This is Flagellar P-ring protein from Aliivibrio fischeri (strain ATCC 700601 / ES114) (Vibrio fischeri).